A 230-amino-acid chain; its full sequence is UPF0173 metal-dependent hydrolase Acid_3917 (230 aa).

It belongs to the UPF0173 family.

In Solibacter usitatus (strain Ellin6076), this protein is UPF0173 metal-dependent hydrolase Acid_3917.